Reading from the N-terminus, the 189-residue chain is Ribosome maturation factor RimM (189 aa).

The PRC barrel domain occupies 96 to 169 (EDEFYYADLE…TLLIDPLAAG (74 aa)).

This sequence belongs to the RimM family. Binds ribosomal protein uS19.

It localises to the cytoplasm. An accessory protein needed during the final step in the assembly of 30S ribosomal subunit, possibly for assembly of the head region. Essential for efficient processing of 16S rRNA. May be needed both before and after RbfA during the maturation of 16S rRNA. It has affinity for free ribosomal 30S subunits but not for 70S ribosomes. This chain is Ribosome maturation factor RimM, found in Rhizobium johnstonii (strain DSM 114642 / LMG 32736 / 3841) (Rhizobium leguminosarum bv. viciae).